The sequence spans 685 residues: Glycine--tRNA ligase beta subunit (685 aa).

This sequence belongs to the class-II aminoacyl-tRNA synthetase family. Tetramer of two alpha and two beta subunits.

The protein resides in the cytoplasm. The catalysed reaction is tRNA(Gly) + glycine + ATP = glycyl-tRNA(Gly) + AMP + diphosphate. This is Glycine--tRNA ligase beta subunit from Azotobacter vinelandii (strain DJ / ATCC BAA-1303).